Reading from the N-terminus, the 257-residue chain is Mitochondrial distribution and morphology protein 12 (257 aa).

Residues 1–256 form the SMP-LTD domain; that stretch reads MSFEINWEKL…WPSWVNLDFN (256 aa). The tract at residues 74-98 is disordered; sequence YEEDNETSSEMHGRDGQNVGESGEE.

This sequence belongs to the MDM12 family. Component of the ER-mitochondria encounter structure (ERMES) or MDM complex, composed of MMM1, MDM10, MDM12 and MDM34. An MMM1 homodimer associates with one molecule of MDM12 on each side in a pairwise head-to-tail manner, and the SMP-LTD domains of MMM1 and MDM12 generate a continuous hydrophobic tunnel for phospholipid trafficking.

It localises to the mitochondrion outer membrane. The protein resides in the endoplasmic reticulum membrane. Its function is as follows. Component of the ERMES/MDM complex, which serves as a molecular tether to connect the endoplasmic reticulum (ER) and mitochondria. Components of this complex are involved in the control of mitochondrial shape and protein biogenesis, and function in nonvesicular lipid trafficking between the ER and mitochondria. MDM12 is required for the interaction of the ER-resident membrane protein MMM1 and the outer mitochondrial membrane-resident beta-barrel protein MDM10. The MDM12-MMM1 subcomplex functions in the major beta-barrel assembly pathway that is responsible for biogenesis of all mitochondrial outer membrane beta-barrel proteins, and acts in a late step after the SAM complex. The MDM10-MDM12-MMM1 subcomplex further acts in the TOM40-specific pathway after the action of the MDM12-MMM1 complex. Essential for establishing and maintaining the structure of mitochondria and maintenance of mtDNA nucleoids. The protein is Mitochondrial distribution and morphology protein 12 of Candida glabrata (strain ATCC 2001 / BCRC 20586 / JCM 3761 / NBRC 0622 / NRRL Y-65 / CBS 138) (Yeast).